Consider the following 165-residue polypeptide: Putative protein FAM86C1P (165 aa).

It belongs to the class I-like SAM-binding methyltransferase superfamily. EEF2KMT family. As to quaternary structure, interacts with EEF2KMT.

This Homo sapiens (Human) protein is Putative protein FAM86C1P.